A 576-amino-acid polypeptide reads, in one-letter code: Aspartate--tRNA ligase (576 aa).

Glu171 provides a ligand contact to L-aspartate. The tract at residues 195–198 is aspartate; it reads QLFK. Arg217 lines the L-aspartate pocket. Residues 217-219 and Gln226 contribute to the ATP site; that span reads RDE. Residue His450 coordinates L-aspartate. An ATP-binding site is contributed by Glu484. Arg491 is a binding site for L-aspartate. 536–539 is a binding site for ATP; it reads GLDR.

It belongs to the class-II aminoacyl-tRNA synthetase family. Type 1 subfamily. As to quaternary structure, homodimer.

It is found in the cytoplasm. It carries out the reaction tRNA(Asp) + L-aspartate + ATP = L-aspartyl-tRNA(Asp) + AMP + diphosphate. Functionally, catalyzes the attachment of L-aspartate to tRNA(Asp) in a two-step reaction: L-aspartate is first activated by ATP to form Asp-AMP and then transferred to the acceptor end of tRNA(Asp). The chain is Aspartate--tRNA ligase from Buchnera aphidicola subsp. Baizongia pistaciae (strain Bp).